Reading from the N-terminus, the 431-residue chain is Glutamate-1-semialdehyde 2,1-aminomutase (431 aa).

Lys-265 carries the post-translational modification N6-(pyridoxal phosphate)lysine.

It belongs to the class-III pyridoxal-phosphate-dependent aminotransferase family. HemL subfamily. In terms of assembly, homodimer. It depends on pyridoxal 5'-phosphate as a cofactor.

The protein localises to the cytoplasm. The catalysed reaction is (S)-4-amino-5-oxopentanoate = 5-aminolevulinate. The protein operates within porphyrin-containing compound metabolism; protoporphyrin-IX biosynthesis; 5-aminolevulinate from L-glutamyl-tRNA(Glu): step 2/2. This Pseudoalteromonas atlantica (strain T6c / ATCC BAA-1087) protein is Glutamate-1-semialdehyde 2,1-aminomutase.